Consider the following 460-residue polypeptide: Mitochondrial distribution and morphology protein 34 (460 aa).

The 196-residue stretch at 1–196 (MSFKFDWESL…LPGIIHRLSQ (196 aa)) folds into the SMP-LTD domain. Positions 304-321 (HNHQAPKRRTIKYKRKSK) are enriched in basic residues. 2 disordered regions span residues 304–356 (HNHQ…PSRE) and 368–460 (EPSS…AYSG). Composition is skewed to low complexity over residues 330–355 (STEV…TPSR) and 393–405 (SPPS…DTSL).

The protein belongs to the MDM34 family. Component of the ER-mitochondria encounter structure (ERMES) or MDM complex, composed of MMM1, MDM10, MDM12 and MDM34.

The protein localises to the mitochondrion outer membrane. Functionally, component of the ERMES/MDM complex, which serves as a molecular tether to connect the endoplasmic reticulum (ER) and mitochondria. Components of this complex are involved in the control of mitochondrial shape and protein biogenesis, and function in nonvesicular lipid trafficking between the ER and mitochondria. MDM34 is required for the interaction of the ER-resident membrane protein MMM1 and the outer mitochondrial membrane-resident beta-barrel protein MDM10. The sequence is that of Mitochondrial distribution and morphology protein 34 from Yarrowia lipolytica (strain CLIB 122 / E 150) (Yeast).